The sequence spans 370 residues: 3-dehydroquinate synthase (370 aa).

NAD(+)-binding positions include 112 to 116, 136 to 137, lysine 149, lysine 158, and 176 to 179; these read GVVGD, TS, and TLRT. Residues glutamate 191, histidine 254, and histidine 276 each contribute to the Zn(2+) site.

This sequence belongs to the sugar phosphate cyclases superfamily. Dehydroquinate synthase family. It depends on Co(2+) as a cofactor. Requires Zn(2+) as cofactor. The cofactor is NAD(+).

The protein resides in the cytoplasm. The catalysed reaction is 7-phospho-2-dehydro-3-deoxy-D-arabino-heptonate = 3-dehydroquinate + phosphate. It participates in metabolic intermediate biosynthesis; chorismate biosynthesis; chorismate from D-erythrose 4-phosphate and phosphoenolpyruvate: step 2/7. In terms of biological role, catalyzes the conversion of 3-deoxy-D-arabino-heptulosonate 7-phosphate (DAHP) to dehydroquinate (DHQ). The polypeptide is 3-dehydroquinate synthase (Xanthomonas campestris pv. campestris (strain 8004)).